The sequence spans 479 residues: Ammonium transporter Rh type C (479 aa).

Residues 1–9 lie on the Cytoplasmic side of the membrane; sequence MAWNTNLRW. The chain crosses the membrane as a helical span at residues 10–30; it reads RLPLTCLLLQVVMVILFGVFV. Topologically, residues 31–60 are extracellular; the sequence is RYDFEADAHWWSERTHKNLSDVENEFYYRY. An N-linked (GlcNAc...) asparagine glycan is attached at asparagine 48. Residues 61 to 81 form a helical membrane-spanning segment; sequence PSFQDVHVMVFVGFGFLMTFL. The Cytoplasmic portion of the chain corresponds to 82–85; that stretch reads QRYG. Residues 86–106 form a helical membrane-spanning segment; that stretch reads FSAVGFNFLLAAFGIQWALLM. Residues 107-123 lie on the Extracellular side of the membrane; that stretch reads QGWFHFLQGRYIVVGVE. The chain crosses the membrane as a helical span at residues 124–144; sequence NLINADFCVASVCVAFGAVLG. At 145-148 the chain is on the cytoplasmic side; that stretch reads KVSP. Residues 149–169 traverse the membrane as a helical segment; the sequence is IQLLIMTFFQVTLFAVNEFIL. The Extracellular segment spans residues 170 to 177; the sequence is LNLLKVKD. A helical membrane pass occupies residues 178–200; it reads AGGSMTIHTFGAYFGLTVTRILY. Residues 201 to 218 lie on the Cytoplasmic side of the membrane; it reads RRNLEQSKERQNSVYQSD. Residues 219-239 traverse the membrane as a helical segment; that stretch reads LFAMIGTLFLWMYWPSFNSAI. Topologically, residues 240 to 250 are extracellular; the sequence is SYHGDSQHRAA. The helical transmembrane segment at 251–271 threads the bilayer; it reads INTYCSLAACVLTSVAISSAL. At 272 to 281 the chain is on the cytoplasmic side; that stretch reads HKKGKLDMVH. A helical transmembrane segment spans residues 282-302; it reads IQNATLAGGVAVGTAAEMMLM. Proline 303 is a topological domain (extracellular). The helical transmembrane segment at 304–324 threads the bilayer; it reads YGALIIGFVCGIISTLGFVYL. Over 325–345 the chain is Cytoplasmic; it reads TPFLESRLHIQDTCGINNLHG. A helical transmembrane segment spans residues 346–366; the sequence is IPGIIGGIVGAVTAASASLEV. Topologically, residues 367–394 are extracellular; sequence YGKEGLVHSFDFQGFKGDWTARTQGKFQ. Residues 395 to 415 traverse the membrane as a helical segment; sequence IYGLLVTLAMALMGGIIVGLI. Residues 416–479 are Cytoplasmic-facing; it reads LRLPFWGQPS…PMASSVPLVP (64 aa).

This sequence belongs to the ammonium transporter (TC 2.A.49) family. Rh subfamily. As to quaternary structure, homotrimer. In terms of processing, N-glycosylated.

It is found in the cell membrane. It localises to the apical cell membrane. It carries out the reaction NH4(+)(in) = NH4(+)(out). The enzyme catalyses methylamine(out) = methylamine(in). It catalyses the reaction CO2(out) = CO2(in). Its function is as follows. Ammonium transporter involved in the maintenance of acid-base homeostasis. Transports ammonium and its related derivative methylammonium across the plasma membrane of epithelial cells likely contributing to renal transepithelial ammonia transport and ammonia metabolism. Postulated to primarily mediate an electroneutral bidirectional transport of NH3 ammonia species according to a mechanism that implies interaction of an NH4(+) ion with acidic residues of the pore entry followed by dissociation of NH4(+) into NH3 and H(+). As a result NH3 transits through the central pore and is protonated on the extracellular side reforming NH4(+). May act as a CO2 channel providing for renal acid secretion. This chain is Ammonium transporter Rh type C (RHCG), found in Pan troglodytes (Chimpanzee).